The following is a 161-amino-acid chain: Endoribonuclease YbeY (161 aa).

His-121, His-125, and His-131 together coordinate Zn(2+).

Belongs to the endoribonuclease YbeY family. Zn(2+) serves as cofactor.

It localises to the cytoplasm. Its function is as follows. Single strand-specific metallo-endoribonuclease involved in late-stage 70S ribosome quality control and in maturation of the 3' terminus of the 16S rRNA. This is Endoribonuclease YbeY from Xylella fastidiosa (strain M23).